A 671-amino-acid polypeptide reads, in one-letter code: ATP-dependent zinc metalloprotease FtsH (671 aa).

Residues 1–22 are Cytoplasmic-facing; that stretch reads MANPNNNNDNKQNNNNNFFNDN. Residues 23–43 form a helical membrane-spanning segment; it reads PLLAFAIFSIVIILIFKSFVG. Topologically, residues 44 to 130 are periplasmic; sequence EGESLGTMMN…ISYEGVVGNG (87 aa). A helical transmembrane segment spans residues 131–151; it reads FFSELISMMLPILIFFAIWIF. Residues 152 to 671 are Cytoplasmic-facing; it reads LAKKMSKGMG…SEESDNNKEA (520 aa). ATP is bound at residue 224-231; that stretch reads GPPGTGKT. Zn(2+) is bound at residue H447. E448 is an active-site residue. Residues H451 and D525 each coordinate Zn(2+). The tract at residues 630–671 is disordered; that stretch reads EKGMPSRLAHKDKVAKNKAEADKKEEALKKEISEESDNNKEA.

The protein in the central section; belongs to the AAA ATPase family. In the C-terminal section; belongs to the peptidase M41 family. Homohexamer. Zn(2+) serves as cofactor.

The protein resides in the cell inner membrane. In terms of biological role, acts as a processive, ATP-dependent zinc metallopeptidase for both cytoplasmic and membrane proteins. Plays a role in the quality control of integral membrane proteins. This is ATP-dependent zinc metalloprotease FtsH from Sulfurovum sp. (strain NBC37-1).